A 186-amino-acid polypeptide reads, in one-letter code: MKIYLASKSPRRQELLKKIYSRFEIIPPEVKEEVYSLNPMELALTLSRQKAENVAAKIKEGVIIAADTVVAVEGKVLGKPRDEEEAYFMLKTLSGREHEVYTGVTLMELPQKREKSFVEVTKVWFYPLTDEEIKSYIDSREPFDKAGAYGIQGKGALFVAKIEGCYFNVVGLPVARLYRELREWGY.

The Proton acceptor role is filled by aspartate 67.

It belongs to the Maf family. YhdE subfamily. A divalent metal cation serves as cofactor.

It localises to the cytoplasm. It carries out the reaction dTTP + H2O = dTMP + diphosphate + H(+). The catalysed reaction is UTP + H2O = UMP + diphosphate + H(+). In terms of biological role, nucleoside triphosphate pyrophosphatase that hydrolyzes dTTP and UTP. May have a dual role in cell division arrest and in preventing the incorporation of modified nucleotides into cellular nucleic acids. This chain is dTTP/UTP pyrophosphatase, found in Carboxydothermus hydrogenoformans (strain ATCC BAA-161 / DSM 6008 / Z-2901).